We begin with the raw amino-acid sequence, 456 residues long: Bifunctional protein GlmU (456 aa).

The interval Met-1–Arg-229 is pyrophosphorylase. UDP-N-acetyl-alpha-D-glucosamine contacts are provided by residues Leu-11–Gly-14, Lys-25, Gln-76, Gly-81–Thr-82, Tyr-103–Asp-105, Gly-140, Glu-154, Asn-169, and Asn-227. Asp-105 contacts Mg(2+). Asn-227 provides a ligand contact to Mg(2+). Residues Leu-230 to Ala-250 form a linker region. Residues Gly-251 to Lys-456 form an N-acetyltransferase region. UDP-N-acetyl-alpha-D-glucosamine contacts are provided by Arg-333 and Lys-351. The active-site Proton acceptor is the His-363. The UDP-N-acetyl-alpha-D-glucosamine site is built by Tyr-366 and Asn-377. Residues Ala-380, Asn-386–Tyr-387, Ser-405, Ala-423, and Arg-440 contribute to the acetyl-CoA site.

This sequence in the N-terminal section; belongs to the N-acetylglucosamine-1-phosphate uridyltransferase family. In the C-terminal section; belongs to the transferase hexapeptide repeat family. As to quaternary structure, homotrimer. Mg(2+) is required as a cofactor.

Its subcellular location is the cytoplasm. It carries out the reaction alpha-D-glucosamine 1-phosphate + acetyl-CoA = N-acetyl-alpha-D-glucosamine 1-phosphate + CoA + H(+). It catalyses the reaction N-acetyl-alpha-D-glucosamine 1-phosphate + UTP + H(+) = UDP-N-acetyl-alpha-D-glucosamine + diphosphate. The protein operates within nucleotide-sugar biosynthesis; UDP-N-acetyl-alpha-D-glucosamine biosynthesis; N-acetyl-alpha-D-glucosamine 1-phosphate from alpha-D-glucosamine 6-phosphate (route II): step 2/2. It functions in the pathway nucleotide-sugar biosynthesis; UDP-N-acetyl-alpha-D-glucosamine biosynthesis; UDP-N-acetyl-alpha-D-glucosamine from N-acetyl-alpha-D-glucosamine 1-phosphate: step 1/1. Its pathway is bacterial outer membrane biogenesis; LPS lipid A biosynthesis. Its function is as follows. Catalyzes the last two sequential reactions in the de novo biosynthetic pathway for UDP-N-acetylglucosamine (UDP-GlcNAc). The C-terminal domain catalyzes the transfer of acetyl group from acetyl coenzyme A to glucosamine-1-phosphate (GlcN-1-P) to produce N-acetylglucosamine-1-phosphate (GlcNAc-1-P), which is converted into UDP-GlcNAc by the transfer of uridine 5-monophosphate (from uridine 5-triphosphate), a reaction catalyzed by the N-terminal domain. The sequence is that of Bifunctional protein GlmU from Escherichia coli O45:K1 (strain S88 / ExPEC).